Consider the following 264-residue polypeptide: Thymidylate synthase (264 aa).

DUMP is bound at residue arginine 21. Histidine 51 serves as a coordination point for (6R)-5,10-methylene-5,6,7,8-tetrahydrofolate. 126-127 (RR) is a binding site for dUMP. Cysteine 146 serves as the catalytic Nucleophile. Residues 166 to 169 (RSCD), asparagine 177, and 207 to 209 (HLY) each bind dUMP. Aspartate 169 is a binding site for (6R)-5,10-methylene-5,6,7,8-tetrahydrofolate. Alanine 263 contributes to the (6R)-5,10-methylene-5,6,7,8-tetrahydrofolate binding site.

The protein belongs to the thymidylate synthase family. Bacterial-type ThyA subfamily. Homodimer.

Its subcellular location is the cytoplasm. The enzyme catalyses dUMP + (6R)-5,10-methylene-5,6,7,8-tetrahydrofolate = 7,8-dihydrofolate + dTMP. It participates in pyrimidine metabolism; dTTP biosynthesis. Its function is as follows. Catalyzes the reductive methylation of 2'-deoxyuridine-5'-monophosphate (dUMP) to 2'-deoxythymidine-5'-monophosphate (dTMP) while utilizing 5,10-methylenetetrahydrofolate (mTHF) as the methyl donor and reductant in the reaction, yielding dihydrofolate (DHF) as a by-product. This enzymatic reaction provides an intracellular de novo source of dTMP, an essential precursor for DNA biosynthesis. This Shewanella sp. (strain MR-4) protein is Thymidylate synthase.